The sequence spans 485 residues: Terminase, large subunit (485 aa).

ADP-binding positions include 17-22, 40-45, and Arg79; these read KPHHVQ and QSGKSE. Residues 22 to 197 are ATPase activity; the sequence is QLAIHRSTAK…EFFLMGWRGG (176 aa). ATP-binding residues include Gln97 and Gln99. The Walker A motif signature appears at 125 to 131; it reads SEFRGKS. A Walker B motif motif is present at residues 145 to 150; sequence FVILDE. The For ATPase activity role is filled by Glu150. The interval 256 to 438 is nuclease; sequence SNSVFSGLDM…DIVMSLALAY (183 aa). Residues Asp294, Asp347, and Asp429 each contribute to the Mg(2+) site.

It belongs to the Tequatrovirus large terminase family. Interacts with the terminase small subunit; the active complex is composed of a pentamer of terminase large subunits and a dodecamer of terminase small subunits. Interacts with the portal protein. The cofactor is Mg(2+).

In terms of biological role, the terminase large subunit acts as an ATP driven molecular motor necessary for viral DNA translocation into empty capsids and as an endonuclease that cuts the viral genome to initiate and to end a packaging reaction The terminase lies at a unique vertex of the procapsid and is composed of two subunits, a small terminase subunit involved in viral DNA recognition (packaging sequence), and a large terminase subunit possessing endonucleolytic and ATPase activities. Both terminase subunits heterooligomerize and are docked on the portal protein to form the packaging machine. The terminase large subunit exhibits endonuclease activity and cleaves the viral genome concatemer. Once the capsid is packaged with the DNA, the terminase complex is substituted by the tail. The sequence is that of Terminase, large subunit from Thermus thermophilus (Thermus thermophilus phage P23-45).